Here is a 265-residue protein sequence, read N- to C-terminus: MSLINLAFKKVKTEKRPALLTYTVAGDSTKKKSLEILKSIAKYADICEIGFPHNTPIADGGQIQSSAYRALKNGIKIKDVFSIVKNFKKSKQSKPVILMGYYNMIYQYGDNNFINICKKVGVDGLIVVDLPYPENKEFAKKCKKKDISFIQLVSPTTSLDRMKKIIRDSHDMVYYISMLSTTGGKLKVSPKKILERYGKIKKLNKNKNIVIGFGITEKTIASLRKADGLVVGSALCKEISNSIKKRQNPVTNVTNIVLKLRKKIS.

Active-site proton acceptor residues include Glu48 and Asp59.

The protein belongs to the TrpA family. In terms of assembly, tetramer of two alpha and two beta chains.

It carries out the reaction (1S,2R)-1-C-(indol-3-yl)glycerol 3-phosphate + L-serine = D-glyceraldehyde 3-phosphate + L-tryptophan + H2O. It participates in amino-acid biosynthesis; L-tryptophan biosynthesis; L-tryptophan from chorismate: step 5/5. Its function is as follows. The alpha subunit is responsible for the aldol cleavage of indoleglycerol phosphate to indole and glyceraldehyde 3-phosphate. This chain is Tryptophan synthase alpha chain, found in Pelagibacter ubique (strain HTCC1062).